Consider the following 213-residue polypeptide: 3-isopropylmalate dehydratase small subunit (213 aa).

This sequence belongs to the LeuD family. LeuD type 1 subfamily. Heterodimer of LeuC and LeuD.

The enzyme catalyses (2R,3S)-3-isopropylmalate = (2S)-2-isopropylmalate. The protein operates within amino-acid biosynthesis; L-leucine biosynthesis; L-leucine from 3-methyl-2-oxobutanoate: step 2/4. Catalyzes the isomerization between 2-isopropylmalate and 3-isopropylmalate, via the formation of 2-isopropylmaleate. In Pseudomonas syringae pv. syringae (strain B728a), this protein is 3-isopropylmalate dehydratase small subunit.